A 206-amino-acid chain; its full sequence is Probable GTP-binding protein EngB (206 aa).

Positions 25–198 (SRAEVAFAGR…AVRIEGWLAP (174 aa)) constitute an EngB-type G domain. The Mg(2+) site is built by S40 and T62.

It belongs to the TRAFAC class TrmE-Era-EngA-EngB-Septin-like GTPase superfamily. EngB GTPase family. It depends on Mg(2+) as a cofactor.

Functionally, necessary for normal cell division and for the maintenance of normal septation. In Thiobacillus denitrificans (strain ATCC 25259 / T1), this protein is Probable GTP-binding protein EngB.